Consider the following 192-residue polypeptide: MAKRVFFSFHYQDVIDFRVNVVRNHWVTKLNQSAAGVFDASLWEDAKKTSDIALKRLINGGLNNTSVTCVLIGSQTFNRRWVRYEIMKSIEKGNKIIGIHINAFKDKYGNIKSKGPNPFDYLGYQYSSDGKQLHLYEWTGGKWEEYKDLAPYRVNQIAPESLRGKFYSLSSVYRVYDWVADDGYNKFSSWVN.

This sequence belongs to the Thoeris B TIR-like family. In terms of assembly, monomer; not seen to interact with ThsA.

It localises to the cytoplasm. Activated upon phage infection. TIR-like domain-containing component of the Thoeris antiviral defense system, composed of ThsA and ThsB. Expression of ThsA and ThsB in B.subtilis (strain BEST7003) confers resistance to phages SBSphiC, SBSphiJ and SPO1. Phage infection activates this protein so that 30 to 45 minutes post-infection with phage SPO1 it generates a signal molecule that in turn activates the NAD(+) hydrolase activity of ThsA. The signal is similar to cyclic ADP-D-ribose, but how it differs is unknown. In vitro purified (but unactivated) ThsB has no NAD(+) hydrolyzing activity, no activity on AMP, CMP, GMP or UMP, does not alter the activity of ThsA, does not bind DNA. Hydrolyzes NAD(+) to make a cyclic ADP-D-ribose (cADPR) signaling molecule; might make 3'cADPR. In Bacillus cereus (strain MSX-D12), this protein is Putative cyclic ADP-D-ribose synthase ThsB1.